Here is a 622-residue protein sequence, read N- to C-terminus: Probable potassium transport system protein Kup 1 (622 aa).

The next 12 membrane-spanning stretches (helical) occupy residues 7-27, 50-70, 96-116, 132-152, 165-185, 210-230, 244-264, 282-302, 334-354, 360-380, 391-411, and 416-436; these read LLVLALGSVGVVYGDIGTSPL, LISLMIWALTIIVTIKYVLFL, TAILFFMGIAGAALFIGDAMI, VTPALSDYVVPIAVVILLLLF, FFGPITLIWFVVMGTIGFVHI, VGIVVLGAVFLTVTGAEALYA, WFTVVFPALTLNYLGQGAFVL, ALLPAVILATAATIIASQAVI, IYLPNVNTLLMFGVMALVFLF, LATAYGISVTGAMVVTTVLSF, TWWAAGALLPLFVLEFVFLGA, and IHDGGYVPILIAATFIVIMWT.

Belongs to the HAK/KUP transporter (TC 2.A.72) family.

The protein localises to the cell inner membrane. It catalyses the reaction K(+)(in) + H(+)(in) = K(+)(out) + H(+)(out). Functionally, transport of potassium into the cell. Likely operates as a K(+):H(+) symporter. The sequence is that of Probable potassium transport system protein Kup 1 from Rhizobium meliloti (strain 1021) (Ensifer meliloti).